The sequence spans 379 residues: Queuine tRNA-ribosyltransferase (379 aa).

The Proton acceptor role is filled by Asp-94. Substrate is bound by residues 94 to 98 (DSGGF), Asp-148, Gln-191, and Gly-218. Positions 249–255 (GVGSPDA) are RNA binding. Catalysis depends on Asp-268, which acts as the Nucleophile. An RNA binding; important for wobble base 34 recognition region spans residues 273 to 277 (TRIAR). The Zn(2+) site is built by Cys-306, Cys-308, Cys-311, and His-337.

The protein belongs to the queuine tRNA-ribosyltransferase family. In terms of assembly, homodimer. Within each dimer, one monomer is responsible for RNA recognition and catalysis, while the other monomer binds to the replacement base PreQ1. It depends on Zn(2+) as a cofactor.

It catalyses the reaction 7-aminomethyl-7-carbaguanine + guanosine(34) in tRNA = 7-aminomethyl-7-carbaguanosine(34) in tRNA + guanine. Its pathway is tRNA modification; tRNA-queuosine biosynthesis. Functionally, catalyzes the base-exchange of a guanine (G) residue with the queuine precursor 7-aminomethyl-7-deazaguanine (PreQ1) at position 34 (anticodon wobble position) in tRNAs with GU(N) anticodons (tRNA-Asp, -Asn, -His and -Tyr). Catalysis occurs through a double-displacement mechanism. The nucleophile active site attacks the C1' of nucleotide 34 to detach the guanine base from the RNA, forming a covalent enzyme-RNA intermediate. The proton acceptor active site deprotonates the incoming PreQ1, allowing a nucleophilic attack on the C1' of the ribose to form the product. After dissociation, two additional enzymatic reactions on the tRNA convert PreQ1 to queuine (Q), resulting in the hypermodified nucleoside queuosine (7-(((4,5-cis-dihydroxy-2-cyclopenten-1-yl)amino)methyl)-7-deazaguanosine). The protein is Queuine tRNA-ribosyltransferase of Oceanobacillus iheyensis (strain DSM 14371 / CIP 107618 / JCM 11309 / KCTC 3954 / HTE831).